Consider the following 195-residue polypeptide: Xanthine phosphoribosyltransferase (195 aa).

Positions 20 and 27 each coordinate xanthine. 128 to 132 serves as a coordination point for 5-phospho-alpha-D-ribose 1-diphosphate; that stretch reads ANGQA. Residue K156 participates in xanthine binding.

This sequence belongs to the purine/pyrimidine phosphoribosyltransferase family. Xpt subfamily. In terms of assembly, homodimer.

The protein localises to the cytoplasm. It carries out the reaction XMP + diphosphate = xanthine + 5-phospho-alpha-D-ribose 1-diphosphate. It functions in the pathway purine metabolism; XMP biosynthesis via salvage pathway; XMP from xanthine: step 1/1. Converts the preformed base xanthine, a product of nucleic acid breakdown, to xanthosine 5'-monophosphate (XMP), so it can be reused for RNA or DNA synthesis. This is Xanthine phosphoribosyltransferase from Latilactobacillus sakei subsp. sakei (strain 23K) (Lactobacillus sakei subsp. sakei).